The sequence spans 328 residues: HTH-type transcriptional regulator MalR (328 aa).

The HTH lacI-type domain maps to 2–57; the sequence is PVTIKDVAKAAGVSPSTVTRVIQNKSTISDETKKRVRKAMKELNYHPNLNARSLVS. Residues 5-24 constitute a DNA-binding region (H-T-H motif); it reads IKDVAKAAGVSPSTVTRVIQ. Positions 173-218 are inducer binding; the sequence is TEYFIKKGCKRIAFIGGSKKLFVTKDRLTGYEQALKHYKLTTDNNR. A dimerization region spans residues 282-291; the sequence is NLAAYVDINS.

Its function is as follows. Transcriptional repressor of the maltosaccharide utilization operons malxCD and malMP. The sequence is that of HTH-type transcriptional regulator MalR (malR) from Streptococcus pneumoniae serotype 4 (strain ATCC BAA-334 / TIGR4).